A 481-amino-acid polypeptide reads, in one-letter code: MPALHNPSSPPPSYEAVTSYRNGNSIDSGDKRQQCSRLMKITSNGRPYSKDFLELFSTMVISTNFSRNRYRFSYVENSCTLLQLLSTLENLQLSQVNRIKSRCGSKVLKSTTKFTIPKTAAKCLCNTFLNARLLQIVNNPSARKFSNEKCLLQLTRKGYSVVSEFLQHNGHNSQAELYASKWNHSAPVIVSISRFSSTDQILKDSSFCEMLLVRMLGSVHEIGKSKNPLLVPVYSVSSPSPKDSLSKVTKYQMFGIDIAEWLMCNTMLLDWSEMETVASDLLIHSYIAYENNSETPLKFSYAKGVSYFLTGKGIATLGWTKNVSNNKLINKINEVEKGSTNKEILETILRKPNLQTYFFEFLKKNFCDENQRFYSEVCEFNDYFSHANETNDHEAIRESFAHACGIYNCFLSSNAPNAVNLPSDLYEKITNHMALAMEVEPLNEWLQLIHILLLEAQTAVLDLMAGDSLLKFLELNGGLGI.

The segment at 1–31 is disordered; that stretch reads MPALHNPSSPPPSYEAVTSYRNGNSIDSGDK. A fungal-DR region spans residues 33–227; that stretch reads QQCSRLMKIT…SVHEIGKSKN (195 aa). Residues 232–312 form the DEP domain; the sequence is PVYSVSSPSP…KGVSYFLTGK (81 aa). The RGS domain maps to 344-474; that stretch reads ILETILRKPN…AGDSLLKFLE (131 aa).

It is found in the nucleus. It localises to the cytoplasm. In terms of biological role, negatively regulates pheromone signaling during mating. Acts in a negative feedback loop that is essential for the mating process. This loop acts to down-regulate cellular sensitivity to pheromone. Activated by ste11. The sequence is that of Regulator of G-protein signaling 1 (rgs1) from Schizosaccharomyces pombe (strain 972 / ATCC 24843) (Fission yeast).